The following is a 241-amino-acid chain: Probable septum site-determining protein MinC (241 aa).

The disordered stretch occupies residues 109 to 135 (PSGARERKVDPSSKTPAKPAEPTYRPT).

Belongs to the MinC family. In terms of assembly, interacts with MinD and FtsZ.

Its function is as follows. Cell division inhibitor that blocks the formation of polar Z ring septums. Rapidly oscillates between the poles of the cell to destabilize FtsZ filaments that have formed before they mature into polar Z rings. Prevents FtsZ polymerization. This is Probable septum site-determining protein MinC from Stutzerimonas stutzeri (strain A1501) (Pseudomonas stutzeri).